The primary structure comprises 276 residues: NADPH-dependent 7-cyano-7-deazaguanine reductase (276 aa).

83–85 (IES) is a substrate binding site. NADPH is bound at residue 85-86 (SK). Cysteine 184 serves as the catalytic Thioimide intermediate. Aspartate 191 functions as the Proton donor in the catalytic mechanism. 223–224 (HE) lines the substrate pocket. An NADPH-binding site is contributed by 252 to 253 (RG).

The protein belongs to the GTP cyclohydrolase I family. QueF type 2 subfamily. As to quaternary structure, homodimer.

It localises to the cytoplasm. The catalysed reaction is 7-aminomethyl-7-carbaguanine + 2 NADP(+) = 7-cyano-7-deazaguanine + 2 NADPH + 3 H(+). The protein operates within tRNA modification; tRNA-queuosine biosynthesis. Catalyzes the NADPH-dependent reduction of 7-cyano-7-deazaguanine (preQ0) to 7-aminomethyl-7-deazaguanine (preQ1). The polypeptide is NADPH-dependent 7-cyano-7-deazaguanine reductase (Desulfotalea psychrophila (strain LSv54 / DSM 12343)).